The primary structure comprises 1614 residues: Protein scribble homolog (1614 aa).

Residues 1–809 (MLKCIPLWRC…MRLWRERMVE (809 aa)) are sufficient for targeting to adherens junction and to inhibit cell proliferation. 17 LRR repeats span residues 11–34 (NRHVESVDKRHCSLQAVPEEIYRY), 35–58 (SRSLEELLLDANQLRELPKPFFRL), 59–81 (LNLRKLGLSDNEIQRLPPEVANF), 83–105 (QLVELDVSRNDIPEIPESIKFCK), 107–127 (LEIADFSGNPLSRLPEGFTQL), 128–150 (RSLAHLALNDVSLQALPGDVGNL), 151–173 (ANLVTLELRENLLKSLPSSLSFL), 174–196 (VKLEQLDLGGNELEVLPDTLGAL), 197–219 (PNLRELWLDRNQLSALPPELGNL), 221–242 (RLVCLDVSENRLEELPAELGGL), 243–265 (LLLTDLLLSQNLLQRLPDGIGQL), 267–288 (QLSILKVDQNRLCEVTEAIGDC), 289–311 (ENLSELILTENLLTALPRSLGKL), 312–334 (TKLTNLNADRNRLEVLPPEIGGC), 336–357 (ALSVLSLRDNRLATLPAELAHT), 359–380 (ELHVLDVAGNRLQSLPFALTHL), and 382–405 (LKALWLAENQAQPMLRFQTEDDAQ). Serine 37 is modified (phosphoserine). Threonine 378 carries the phosphothreonine modification. Disordered stretches follow at residues 417–441 (PQQPPPSLEESGLQSSPSESWSDAP), 462–608 (GAAA…RLIR), and 636–692 (AQPD…VVSA). Polar residues predominate over residues 428 to 437 (GLQSSPSESW). Threonine 475 bears the Phosphothreonine mark. The span at 479-494 (SELKVMKRGVEERRGE) shows a compositional bias: basic and acidic residues. Residues 516–533 (TESGLSEDSQPSTGTASQ) are compositionally biased toward polar residues. The segment covering 548–557 (QQEAAPNAQE) has biased composition (low complexity). The segment covering 662–686 (EEEDEEDEEEDEEEEEVAVAEEDKE) has biased composition (acidic residues). A coiled-coil region spans residues 664-691 (EDEEDEEEDEEEEEVAVAEEDKEEAVVS). Residues serine 699 and serine 755 each carry the phosphoserine modification. Positions 708-1219 (IEPARIEEEE…SLESVSSIDR (512 aa)) are interaction with ARHGEF7. The PDZ 1 domain maps to 719-806 (TLTIVRQTGG…TVQMRLWRER (88 aa)). A required for interaction with VIM region spans residues 719–1184 (TLTIVRQTGG…TVLVCDGFDT (466 aa)). Threonine 817 bears the Phosphothreonine mark. Serine 826, serine 866, and serine 930 each carry phosphoserine. Residues 853–941 (VACLVRSEKG…TIALLLEREA (89 aa)) form the PDZ 2 domain. Positions 940-971 (EAGGPLPPSPLPHSPPPPVTAPSTVVTASPGE) are disordered. Positions 944 to 959 (PLPPSPLPHSPPPPVT) are enriched in pro residues. A compositionally biased stretch (low complexity) spans 960–969 (APSTVVTASP). 2 PDZ domains span residues 994-1083 (EICL…RRDP) and 1090-1178 (ELCI…TVLV). Phosphoserine is present on residues serine 1130, serine 1210, serine 1213, serine 1216, serine 1222, serine 1260, serine 1268, and serine 1271. Residues 1214-1448 (VSSIDRELSP…LPDRALSPAE (235 aa)) form a disordered region. Over residues 1217–1232 (IDRELSPEGCGKEKEP) the composition is skewed to basic and acidic residues. Threonine 1304 bears the Phosphothreonine mark. At serine 1310 the chain carries Phosphoserine. The segment covering 1315–1327 (SFRERQKYFELEV) has biased composition (basic and acidic residues). Serine 1340 is subject to Phosphoserine. Residues 1341–1368 (LVGADDLRKMQEEEARKLQQKRAQLMRE) are a coiled coil. Residues 1345 to 1357 (DDLRKMQEEEARK) are compositionally biased toward basic and acidic residues. Positions 1378-1390 (LDGEAPDDEEPEE) are enriched in acidic residues. The segment covering 1396–1408 (GPAAGLSPSSPQP) has biased composition (low complexity). 2 positions are modified to phosphoserine: serine 1402 and serine 1405. Residues 1418–1429 (AKAERRHQERLR) are compositionally biased toward basic and acidic residues. A phosphoserine mark is found at serine 1432, serine 1445, and serine 1467. The interval 1476–1524 (QMVLSKSQEGRSRRGPLERLAEAPSPAPTPSPTPVEDLGLQTSTSPGRL) is disordered. The span at 1483–1496 (QEGRSRRGPLERLA) shows a compositional bias: basic and acidic residues. The residue at position 1500 (serine 1500) is a Phosphoserine. Position 1504 is a phosphothreonine (threonine 1504). A phosphoserine mark is found at serine 1506, serine 1520, and serine 1550. A disordered region spans residues 1581–1614 (GRPSPGTVGPEEVTLCSSRRPVRPGRRGLGPVPS).

Belongs to the LAP (LRR and PDZ) protein family. In terms of assembly, interacts with UBE3A. Interacts with PAK1 and PAK2. Interacts (via PDZ domains) with VANGL2. Interacts (via PDZ domains) with LPP and TRIP6; the interaction is direct. Interacts (via PDZ domains) with TJP2. Interacts (via PDZ domains) with APC; may mediate APC targeting to adherens junctions of epithelial cells. Interacts (via PDZ domains) with TSHR; regulates TSHR trafficking and function. Interacts with ARHGEF7 and GIT1; interacts directly with ARHGEF7. Interacts with CTNNB1. Interacts with MAPK12. Interacts (via PDZ domains 1 and 3) with MCC. Interacts with DLG5. Interacts with STK4/MST1 and LATS1 in the presence of DLG5. Interacts (via PDZ domain 3) with CRTAM (via PDZ-binding motif); the interaction promotes CRTAM and SCRIB polarization in a subset of CD4+ T-cells. Interacts with YES1, when YES1 is in a closed conformation; the interaction facilitates YES1 autophosphorylation. Interacts (via PDZ domains) with VIM; the interaction protects SCRIB from proteasomal degradation and facilitates SCRIB localization to intermediate filaments, the interaction is reduced by cell contact inhibition. Post-translationally, ubiquitinated; targeted for UBE3A-dependent multiubiquitination and degraded. In terms of processing, palmitoylated. Could be depalmitoylated by LYPLA1 and/or LYPLA2. Palmitoylation of SCRIB by ZDHHC7 is required for its localization to cell-cell junctions, function in the establishement of epithelial cell polarity and the regulation of downstream signaling pathways important for epithelial cell differentiation.

The protein resides in the cell membrane. It is found in the cell junction. It localises to the adherens junction. The protein localises to the cell projection. Its subcellular location is the lamellipodium. The protein resides in the cytoplasm. It is found in the postsynapse. It localises to the presynapse. In terms of biological role, scaffold protein involved in different aspects of polarized cell differentiation regulating epithelial and neuronal morphogenesis and T-cell polarization. Via its interaction with CRTAM, required for the late phase polarization of a subset of CD4+ T-cells, which in turn regulates TCR-mediated proliferation and IFNG and IL22 production. Plays a role in cell directional movement, cell orientation, cell sheet organization and Golgi complex polarization at the cell migration front. Promotes epithelial cell layer barrier function via maintaining cell-cell adhesion. Most probably functions in the establishment of apico-basal cell polarity. May function in cell proliferation regulating progression from G1 to S phase and as a positive regulator of apoptosis for instance during acinar morphogenesis of the mammary epithelium. May regulate cell invasion via MAPK-mediated cell migration and adhesion. May play a role in exocytosis and in the targeting of synaptic vesicles to synapses. Functions as an activator of Rac GTPase activity. This Canis lupus familiaris (Dog) protein is Protein scribble homolog.